Here is a 312-residue protein sequence, read N- to C-terminus: 4-hydroxy-3-methylbut-2-enyl diphosphate reductase (312 aa).

Cysteine 14 contributes to the [4Fe-4S] cluster binding site. Residues histidine 43 and histidine 76 each coordinate (2E)-4-hydroxy-3-methylbut-2-enyl diphosphate. 2 residues coordinate dimethylallyl diphosphate: histidine 43 and histidine 76. Positions 43 and 76 each coordinate isopentenyl diphosphate. A [4Fe-4S] cluster-binding site is contributed by cysteine 98. A (2E)-4-hydroxy-3-methylbut-2-enyl diphosphate-binding site is contributed by histidine 125. Position 125 (histidine 125) interacts with dimethylallyl diphosphate. Histidine 125 lines the isopentenyl diphosphate pocket. The active-site Proton donor is the glutamate 127. Threonine 165 serves as a coordination point for (2E)-4-hydroxy-3-methylbut-2-enyl diphosphate. Cysteine 195 contacts [4Fe-4S] cluster. Residues serine 223, serine 224, asparagine 225, and serine 269 each contribute to the (2E)-4-hydroxy-3-methylbut-2-enyl diphosphate site. Serine 223, serine 224, asparagine 225, and serine 269 together coordinate dimethylallyl diphosphate. Isopentenyl diphosphate-binding residues include serine 223, serine 224, asparagine 225, and serine 269.

This sequence belongs to the IspH family. It depends on [4Fe-4S] cluster as a cofactor.

It carries out the reaction isopentenyl diphosphate + 2 oxidized [2Fe-2S]-[ferredoxin] + H2O = (2E)-4-hydroxy-3-methylbut-2-enyl diphosphate + 2 reduced [2Fe-2S]-[ferredoxin] + 2 H(+). It catalyses the reaction dimethylallyl diphosphate + 2 oxidized [2Fe-2S]-[ferredoxin] + H2O = (2E)-4-hydroxy-3-methylbut-2-enyl diphosphate + 2 reduced [2Fe-2S]-[ferredoxin] + 2 H(+). It participates in isoprenoid biosynthesis; dimethylallyl diphosphate biosynthesis; dimethylallyl diphosphate from (2E)-4-hydroxy-3-methylbutenyl diphosphate: step 1/1. The protein operates within isoprenoid biosynthesis; isopentenyl diphosphate biosynthesis via DXP pathway; isopentenyl diphosphate from 1-deoxy-D-xylulose 5-phosphate: step 6/6. In terms of biological role, catalyzes the conversion of 1-hydroxy-2-methyl-2-(E)-butenyl 4-diphosphate (HMBPP) into a mixture of isopentenyl diphosphate (IPP) and dimethylallyl diphosphate (DMAPP). Acts in the terminal step of the DOXP/MEP pathway for isoprenoid precursor biosynthesis. The protein is 4-hydroxy-3-methylbut-2-enyl diphosphate reductase of Leptospira interrogans serogroup Icterohaemorrhagiae serovar copenhageni (strain Fiocruz L1-130).